A 143-amino-acid polypeptide reads, in one-letter code: Ribosome-binding factor A (143 aa).

Residues 1 to 20 (MRFMGKNKFHTGPGPSQRQL) form a disordered region.

It belongs to the RbfA family. As to quaternary structure, monomer. Binds 30S ribosomal subunits, but not 50S ribosomal subunits or 70S ribosomes.

It localises to the cytoplasm. Its function is as follows. One of several proteins that assist in the late maturation steps of the functional core of the 30S ribosomal subunit. Associates with free 30S ribosomal subunits (but not with 30S subunits that are part of 70S ribosomes or polysomes). Required for efficient processing of 16S rRNA. May interact with the 5'-terminal helix region of 16S rRNA. The polypeptide is Ribosome-binding factor A (Roseobacter denitrificans (strain ATCC 33942 / OCh 114) (Erythrobacter sp. (strain OCh 114))).